Consider the following 204-residue polypeptide: E3 ubiquitin-protein ligase MPSR1 (204 aa).

The RING-type; atypical zinc finger occupies 113–154 (CVICLEEWKSEETVKEMPCKHRFHGGCIEKWLGFHGSCPVCR).

In terms of processing, autoubiquitinated.

It localises to the cytoplasm. The enzyme catalyses S-ubiquitinyl-[E2 ubiquitin-conjugating enzyme]-L-cysteine + [acceptor protein]-L-lysine = [E2 ubiquitin-conjugating enzyme]-L-cysteine + N(6)-ubiquitinyl-[acceptor protein]-L-lysine.. In terms of biological role, E3 ubiquitin-protein ligase involved in protein quality control (PQC) under proteotoxic stress. Is essential to plant survival under proteotoxic stress. Functions by removing damaged proteins before they form cytotoxic aggregates. Recognizes misfolded proteins selectively and tethers polyubiquitin chains to the proteins directly for subsequent degradation by the 26S proteasome pathway. Targets misfolded proteins independently of cytoplasmic chaperones. Associates with the 26S proteasome and sustains the structural integrity of the proteasome complex at the initial stage of proteotoxic stress. Under normal conditions, MPSR1 becomes highly unstable by its autoubiquitination activity and is stabilized during proteotoxic stress by conjugating ubiquitins on misfolded proteins. In Arabidopsis thaliana (Mouse-ear cress), this protein is E3 ubiquitin-protein ligase MPSR1.